We begin with the raw amino-acid sequence, 832 residues long: Golgin subfamily A member 6-like protein 24 (832 aa).

Disordered stretches follow at residues 1 to 107 (MWPQ…QEAL), 303 to 333 (QEQE…MRRQ), 351 to 431 (MHEQ…EMWR), 508 to 652 (QEEM…EQEE), and 664 to 832 (QEEM…MQEH). The segment covering 13-27 (LPTHPHLPTHPHLPT) has biased composition (basic residues). A compositionally biased stretch (basic and acidic residues) spans 37 to 58 (MSKETRQSKLAEAKEQLTDHHP). 2 stretches are compositionally biased toward polar residues: residues 59-69 (QTNPSVGTAAS) and 77-89 (NNGT…TSGG). Over residues 92 to 107 (SPEDEQKASHQHQEAL) the composition is skewed to basic and acidic residues. Residues 163–828 (LEQALSAVAT…EVRLRQQEEK (666 aa)) are a coiled coil. 2 stretches are compositionally biased toward basic and acidic residues: residues 664-684 (QEEM…KMWE) and 692-832 (QEEK…MQEH).

The protein belongs to the GOLGA6 family.

The sequence is that of Golgin subfamily A member 6-like protein 24 from Homo sapiens (Human).